The following is a 337-amino-acid chain: Glyceraldehyde-3-phosphate dehydrogenase (337 aa).

Residues 13 to 14 (RI), D35, and R80 each bind NAD(+). D-glyceraldehyde 3-phosphate-binding positions include 150 to 152 (SCT), T181, 210 to 211 (TG), and R233. C151 (nucleophile) is an active-site residue. N315 contributes to the NAD(+) binding site.

It belongs to the glyceraldehyde-3-phosphate dehydrogenase family. In terms of assembly, homotetramer.

The protein resides in the cytoplasm. The enzyme catalyses D-glyceraldehyde 3-phosphate + phosphate + NAD(+) = (2R)-3-phospho-glyceroyl phosphate + NADH + H(+). It participates in carbohydrate degradation; glycolysis; pyruvate from D-glyceraldehyde 3-phosphate: step 1/5. The polypeptide is Glyceraldehyde-3-phosphate dehydrogenase (GPDA) (Colletotrichum lindemuthianum (Bean anthracnose fungus)).